The sequence spans 429 residues: Phosphomethylpyrimidine synthase 1 (429 aa).

Residues Asn65, Met94, Tyr123, His162, 184–186, 225–228, and Glu264 each bind substrate; these read SRG and DGLR. His268 serves as a coordination point for Zn(2+). Tyr291 provides a ligand contact to substrate. His332 is a Zn(2+) binding site. Residues Cys408, Cys411, and Cys415 each coordinate [4Fe-4S] cluster.

The protein belongs to the ThiC family. [4Fe-4S] cluster serves as cofactor.

It catalyses the reaction 5-amino-1-(5-phospho-beta-D-ribosyl)imidazole + S-adenosyl-L-methionine = 4-amino-2-methyl-5-(phosphooxymethyl)pyrimidine + CO + 5'-deoxyadenosine + formate + L-methionine + 3 H(+). It participates in cofactor biosynthesis; thiamine diphosphate biosynthesis. Functionally, catalyzes the synthesis of the hydroxymethylpyrimidine phosphate (HMP-P) moiety of thiamine from aminoimidazole ribotide (AIR) in a radical S-adenosyl-L-methionine (SAM)-dependent reaction. This is Phosphomethylpyrimidine synthase 1 from Methanosphaera stadtmanae (strain ATCC 43021 / DSM 3091 / JCM 11832 / MCB-3).